The primary structure comprises 364 residues: tRNA 2-selenouridine synthase (364 aa).

In terms of domain architecture, Rhodanese spans 14–137 (LIADTPIIDV…LRQTAIQATI (124 aa)). The S-selanylcysteine intermediate role is filled by Cys-97.

This sequence belongs to the SelU family. In terms of assembly, monomer.

It carries out the reaction 5-methylaminomethyl-2-thiouridine(34) in tRNA + selenophosphate + (2E)-geranyl diphosphate + H2O + H(+) = 5-methylaminomethyl-2-selenouridine(34) in tRNA + (2E)-thiogeraniol + phosphate + diphosphate. The enzyme catalyses 5-methylaminomethyl-2-thiouridine(34) in tRNA + (2E)-geranyl diphosphate = 5-methylaminomethyl-S-(2E)-geranyl-thiouridine(34) in tRNA + diphosphate. It catalyses the reaction 5-methylaminomethyl-S-(2E)-geranyl-thiouridine(34) in tRNA + selenophosphate + H(+) = 5-methylaminomethyl-2-(Se-phospho)selenouridine(34) in tRNA + (2E)-thiogeraniol. The catalysed reaction is 5-methylaminomethyl-2-(Se-phospho)selenouridine(34) in tRNA + H2O = 5-methylaminomethyl-2-selenouridine(34) in tRNA + phosphate. Involved in the post-transcriptional modification of the uridine at the wobble position (U34) of tRNA(Lys), tRNA(Glu) and tRNA(Gln). Catalyzes the conversion of 2-thiouridine (S2U-RNA) to 2-selenouridine (Se2U-RNA). Acts in a two-step process involving geranylation of 2-thiouridine (S2U) to S-geranyl-2-thiouridine (geS2U) and subsequent selenation of the latter derivative to 2-selenouridine (Se2U) in the tRNA chain. The polypeptide is tRNA 2-selenouridine synthase (Escherichia coli (strain ATCC 8739 / DSM 1576 / NBRC 3972 / NCIMB 8545 / WDCM 00012 / Crooks)).